We begin with the raw amino-acid sequence, 352 residues long: MKQTILDLMRMSRICRMVLATCLGSFILVIFYFQSMFQPVMRRNPFAAEGCCRKGSRNALQELYNPTQAEFSAAAVLHQARRDQVAETCRAHSASSRKRRVLTPSDLKHLVVDEDHELIYCYVPKVACTNWKRVMMVLSGRGKYSNPMEIPSNEAHVPSNLKTLNQYSIPDINHRLKNYLKFLFVREPFERLVSAYRNKFTLRYNTSFHKRYGTKIVRRYRKNATTEALQSGADVKFQEFAEYLVDPGTQREAPLNEHWQTVYSLCHPCHIHYDLVGKYETLEDDANYVLKLVGEGDSLRFPSFAKSTRTTDQMAAMFFGNISSQQQSQLYQLYKLDYLMFNYSIPSYLKLQ.

Over 1 to 16 (MKQTILDLMRMSRICR) the chain is Cytoplasmic. A helical; Signal-anchor for type II membrane protein transmembrane segment spans residues 17–37 (MVLATCLGSFILVIFYFQSMF). The Lumenal portion of the chain corresponds to 38–352 (QPVMRRNPFA…YSIPSYLKLQ (315 aa)). 3'-phosphoadenylyl sulfate contacts are provided by residues 124 to 130 (PKVACTN) and 186 to 194 (REPFERLVS). N-linked (GlcNAc...) asparagine glycans are attached at residues Asn205, Asn223, Asn321, and Asn342.

It belongs to the sulfotransferase 2 family.

The protein resides in the golgi apparatus membrane. It catalyses the reaction chondroitin beta-D-glucuronate + n 3'-phosphoadenylyl sulfate = chondroitin 4'-sulfate + n adenosine 3',5'-bisphosphate + n H(+). In terms of biological role, catalyzes the transfer of sulfate to position 4 of the N-acetylgalactosamine (GalNAc) residue of chondroitin. This Danio rerio (Zebrafish) protein is Carbohydrate sulfotransferase 11 (chst11).